Consider the following 129-residue polypeptide: 3-aminoacrylate deaminase RutC (129 aa).

It belongs to the RutC family.

The catalysed reaction is (Z)-3-aminoacrylate + H2O + H(+) = 3-oxopropanoate + NH4(+). Functionally, involved in pyrimidine catabolism. Catalyzes the deamination of 3-aminoacrylate to malonic semialdehyde, a reaction that can also occur spontaneously. RutC may facilitate the reaction and modulate the metabolic fitness, rather than catalyzing essential functions. In Caulobacter sp. (strain K31), this protein is 3-aminoacrylate deaminase RutC.